Reading from the N-terminus, the 180-residue chain is uncharacterized protein (180 aa).

This is an uncharacterized protein from Staphylococcus aureus.